The primary structure comprises 62 residues: Large ribosomal subunit protein bL28 (62 aa).

Belongs to the bacterial ribosomal protein bL28 family.

The protein is Large ribosomal subunit protein bL28 of Wolinella succinogenes (strain ATCC 29543 / DSM 1740 / CCUG 13145 / JCM 31913 / LMG 7466 / NCTC 11488 / FDC 602W) (Vibrio succinogenes).